We begin with the raw amino-acid sequence, 283 residues long: MMRILLFLATNMAVMLVLGIILNVTGIAGNSTGGILIMALLFGFAGSLISLFLSKTMALRSVDGEVITQPRNQTERWLIDTVSRQAQKAGIPMPDVAIYHSPDVNAFATGATKSNSLVAVSTGLLNNMTEAEAEAVLAHEISHISNGDMVTMALLQGVLNTFVIFLSRVIATAVASSRNNNGEETRSSGIYFLVSMVLEMLFGVLASIIAMWFSRYREFRADAGSASLVGKEKMIMALQRLQQLHEPQNLEGSLNAFMINGKRSELFMSHPPLEKRIEALRNL.

2 helical membrane-spanning segments follow: residues 4–24 and 33–53; these read ILLF…ILNV and GGIL…SLFL. His139 is a Zn(2+) binding site. Glu140 is an active-site residue. His143 is a binding site for Zn(2+). The next 2 helical transmembrane spans lie at 147–167 and 190–210; these read GDMV…IFLS and IYFL…SIIA. Glu218 provides a ligand contact to Zn(2+).

Belongs to the peptidase M48B family. Zn(2+) serves as cofactor.

It localises to the cell inner membrane. The polypeptide is Protease HtpX (Haemophilus influenzae (strain 86-028NP)).